Reading from the N-terminus, the 421-residue chain is Telomeric repeat-binding factor 1 (421 aa).

Positions 1 to 30 (MAETVSSAARDAPSREGWTDSDSPEQEEVG) are disordered. A2 carries the N-acetylalanine modification. The segment at 49 to 255 (ENAELVAEVE…AATKVVENEK (207 aa)) is TRFH mediates dimerization. A Glycyl lysine isopeptide (Lys-Gly) (interchain with G-Cter in SUMO2) cross-link involves residue K200. S206 carries the phosphoserine; by ATM modification. Residues 252–365 (ENEKARTQAS…PDTDDKSGRR (114 aa)) are interaction with RLIM. Positions 253 to 266 (NEKARTQASKDRPD) are enriched in basic and acidic residues. The segment at 253–366 (NEKARTQASK…DTDDKSGRRK (114 aa)) is disordered. Polar residues predominate over residues 284–310 (VNGQQSTETEPLVDTVSSIRSHKNALS). Residues 313–367 (KHRRAPSDFSRNEARTGTLQCETTMERNRRTSGRNRLCVSENQPDTDDKSGRRKR) carry the Nuclear localization signal motif. Positions 362–419 (SGRRKRQTWLWEEDRILKCGVKKYGEGNWAKILSHYKFNNRTSVMLKDRWRTMKRLKL) constitute an HTH myb-type domain. The segment at residues 390-415 (WAKILSHYKFNNRTSVMLKDRWRTMK) is a DNA-binding region (H-T-H motif).

Homodimer; can contain both isoforms. Found in a complex with POT1; TINF2 and TNKS1. Interacts with ATM, TINF2, TNKS1, TNKS2, PINX1, NEK2 and MAPRE1. Component of the shelterin complex (telosome) composed of TERF1, TERF2, TINF2, TERF2IP ACD and POT1. Interacts with RLIM (via N-terminus). Interacts with FBXO4. Interaction with TINF2 protects against interaction with FBXO4 and subsequent polyubiquitination and proteasomal degradation. Interacts with GNL3L; this interaction promotes homodimerization. Interacts with TIN2. Interactions with GNL3L and TIN2 are mutually exclusive. Interacts with RTEL1. Interacts with CCDC79/TERB1. In terms of processing, phosphorylated preferentially on Ser-219 in an ATM-dependent manner in response to ionizing DNA damage. Post-translationally, ADP-ribosylation by TNKS1 or TNKS2 diminishes its ability to bind to telomeric DNA. Ubiquitinated by RLIM/RNF12, leading to its degradation by the proteasome. Ubiquitinated by a SCF (SKP1-CUL1-F-box protein) ubiquitin-protein ligase complex, leading to its degradation by the proteasome.

It localises to the nucleus. It is found in the chromosome. The protein localises to the telomere. The protein resides in the cytoplasm. Its subcellular location is the cytoskeleton. It localises to the spindle. Binds the telomeric double-stranded 5'-TTAGGG-3' repeat and negatively regulates telomere length. Involved in the regulation of the mitotic spindle. Component of the shelterin complex (telosome) that is involved in the regulation of telomere length and protection. Shelterin associates with arrays of double-stranded 5'-TTAGGG-3' repeats added by telomerase and protects chromosome ends; without its protective activity, telomeres are no longer hidden from the DNA damage surveillance and chromosome ends are inappropriately processed by DNA repair pathways. The sequence is that of Telomeric repeat-binding factor 1 (Terf1) from Mus musculus (Mouse).